The sequence spans 147 residues: Hemoglobin subunit beta (147 aa).

The Globin domain maps to 2–147 (EWTDAERSAI…VVSALCRQYH (146 aa)). H63 and H92 together coordinate heme b.

The protein belongs to the globin family. Heterotetramer of two alpha chains and two beta chains. As to expression, red blood cells.

Involved in oxygen transport from gills to the various peripheral tissues. This chain is Hemoglobin subunit beta (hbb), found in Carassius auratus (Goldfish).